Here is a 670-residue protein sequence, read N- to C-terminus: uncharacterized protein (670 aa).

The disordered stretch occupies residues 53-83 (PTAKPSDFPGDAVTGTQPVPREPSSLPRTTP). 27 tandem repeats follow at residues 143 to 158 (ATPAGANDTANITTAT), 171 to 186 (ATPAGANDTANITTAT), 200 to 214 (ATPAGANDTAVTTTP), 215 to 233 (ATPAGANDTANGTVVTTTP), 234 to 252 (AMPAGANDTANGTAVTTTP), 253 to 268 (AMPAGANDTANITTAT), 279 to 293 (TMPAGATDTVVTTTP), 294 to 309 (AMPTGANDTANITTAT), 320 to 334 (TMPAGATDTVVTTTP), 335 to 349 (AMPAGANDTANVTKP), 362 to 376 (AMPTGATDTVVTTTP), 377 to 391 (AMPTGATDTVVTTTP), 392 to 406 (AMPTGATDTVVTTTP), 407 to 421 (AKPAGANGTVVTTTP), 422 to 436 (AMPAGANDTVVTTAP), 437 to 452 (ATPAGANDTANVTKPT), 464 to 477 (VKPTGATGTVTTTT), 478 to 493 (AKPTGANDTANVTKPT), 504 to 517 (AKPTGATGTVTVAT), 518 to 531 (AKPTGATGTVTTTT), 532 to 545 (AKPTGANGTVTTTT), 546 to 559 (AKPTGATGTVTTTT), 560 to 573 (AKPTGANGTVTTTT), 574 to 587 (AKPAGANGTVTTTT), 588 to 601 (AKPAGANGTVTTTT), 602 to 615 (AKPAGANGTVTTTT), and 616 to 629 (AKPAGANGTVTTTT). Residues 187-225 (PAGANDTAVTTTSATPAGANDTAVTTTPATPAGANDTAN) are disordered. The segment covering 205–225 (ANDTAVTTTPATPAGANDTAN) has biased composition (low complexity). The tract at residues 339-395 (GANDTANVTKPAGSTDTVVTTTPAMPTGATDTVVTTTPAMPTGATDTVVTTTPAMPT) is disordered. Residues 342–362 (DTANVTKPAGSTDTVVTTTPA) show a composition bias toward polar residues. A compositionally biased stretch (low complexity) spans 363 to 395 (MPTGATDTVVTTTPAMPTGATDTVVTTTPAMPT). 2 stretches are compositionally biased toward low complexity: residues 471-482 (GTVTTTTAKPTG) and 490-503 (TKPTGATGTVTTTT). A disordered region spans residues 471–503 (GTVTTTTAKPTGANDTANVTKPTGATGTVTTTT). Over residues 525–634 (GTVTTTTAKP…VTTTTAKPAG (110 aa)) the composition is skewed to low complexity. The tract at residues 525–670 (GTVTTTTAKP…GHKPKSGARR (146 aa)) is disordered. Basic residues predominate over residues 638–654 (GHGHGHGHGHGHGHGHG).

This is an uncharacterized protein from Ictalurid herpesvirus 1 (strain Auburn) (IcHV-1).